We begin with the raw amino-acid sequence, 309 residues long: E3 ubiquitin-protein ligase SINAT5 (309 aa).

The RING-type zinc finger occupies 46–82; the sequence is CPVCTNSMYPPIHQCHNGHTLCSTCKSRVHNRCPTCR. The interval 96–289 is SBD; it reads VAESLELPCK…KELKLRVTGR (194 aa). An SIAH-type zinc finger spans residues 99 to 159; the sequence is SLELPCKYYN…LVAHLRDDHK (61 aa). Zn(2+) is bound by residues cysteine 104, cysteine 111, histidine 123, cysteine 127, cysteine 134, cysteine 141, histidine 153, and histidine 158.

Belongs to the SINA (Seven in absentia) family. As to quaternary structure, homodimer; homodimerization is essential for its function. Interacts with UBC28 and NAC021/NAC022. Interacts with SINAT6. Interacts with ATG6 and TRAF1A. Interacts with WAV3. Interacts with FREE1. Expressed at low level in the vascular tissue of mature roots. Expressed in lateral roots and in elongation zone of the main root upon stimulation by auxin. Colocalizes with NAC021/NAC022.

Its subcellular location is the nucleus. It localises to the cytoplasm. The enzyme catalyses S-ubiquitinyl-[E2 ubiquitin-conjugating enzyme]-L-cysteine + [acceptor protein]-L-lysine = [E2 ubiquitin-conjugating enzyme]-L-cysteine + N(6)-ubiquitinyl-[acceptor protein]-L-lysine.. It functions in the pathway protein modification; protein ubiquitination. Its function is as follows. E3 ubiquitin-protein ligase that mediates ubiquitination and subsequent proteasomal degradation of target proteins. E3 ubiquitin ligases accept ubiquitin from an E2 ubiquitin-conjugating enzyme in the form of a thioester and then directly transfers the ubiquitin to targeted substrates. Mediates the ubiquitination and proteasomal-dependent degradation of NAC021/NAC022, a transcription activator that functions downstream of the auxin signals, thereby acting as a down-regulator of auxin signals. Involved in the formation of lateral roots. Is antagonist to SINAT1, SINAT2, SINAT3 and SINAT4 by suppressing FREE1 ubiquitination and degradation mediated by SINAT1, SINAT2, SINAT3 and SINAT4, and promoting FREE1 accumulation. This is E3 ubiquitin-protein ligase SINAT5 from Arabidopsis thaliana (Mouse-ear cress).